The chain runs to 165 residues: MLPVITRFARPALMAIRPVNAMGVLRASSITKRLYHPKVIEHYTHPRNVGSLDKKLPNVGTGLVGAPACGDVMRLQIKVNDSTGVIEDVKFKTFGCGSAIASSSYMTELVQGMTLDDAAKIKNTEIAKELSLPPVKLHCSMLAEDAIKAAIKDYKSKRNTPTMLS.

The N-terminal 27 residues, 1 to 27 (MLPVITRFARPALMAIRPVNAMGVLRA), are a transit peptide targeting the mitochondrion. Residues 132–136 (LPPVK) are SSQ1 binding region.

It belongs to the NifU family. Homodimer, but can exist as monomers or trimers. Oligomerization may be regulated by Zn(2+) availability. Component of the core Fe-S cluster (ISC) assembly machinery. Interacts with YFH1/frataxin with a 1 to 1 stoichiometry; the interaction is direct. Interacts with the mitochondrial co-chaperones JAC1 and SSQ1. Interacts with NFS1. Interacts with YAH1/ferredoxin; interacts with the reduced form. The cofactor is [2Fe-2S] cluster. Zn(2+) serves as cofactor.

It is found in the mitochondrion matrix. It functions in the pathway cofactor biosynthesis; iron-sulfur cluster biosynthesis. Scaffold protein for the de novo synthesis of iron-sulfur (Fe-S) clusters within mitochondria, which is required for maturation of both mitochondrial and cytoplasmic [2Fe-2S] and [4Fe-4S] proteins. First, a [2Fe-2S] cluster is transiently assembled on the scaffold proteins ISU1 and ISU2. In a second step, the cluster is released from ISU1/ISU2, transferred to glutaredoxin GRX5, followed by the formation of mitochondrial [2Fe-2S] proteins, the synthesis of [4Fe-4S] clusters and their target-specific insertion into the recipient apoproteins. Cluster assembly on ISU1/ISU2 depends on the function of the cysteine desulfurase complex NFS1-ISD11, which serves as the sulfur donor for cluster synthesis, the iron-binding protein frataxin (YFH1) as the putative iron donor, and the electron transfer chain comprised of ferredoxin reductase ARH1 and ferredoxin YAH1, which receive their electrons from NADH. Fe-S cluster release from ISU1/ISU2 is achieved by interaction with the Hsp70 chaperone SSQ1, assisted by the DnaJ-like co-chaperone JAC1 and the nucleotide exchange factor MGE1. ISU1 is the major isoform in yeast, while ISU2 is not detectable in cells grown to stationary phase. Also involved in production of a sulfur precursor required for thiolation of cytoplasmic tRNAs. This chain is Iron sulfur cluster assembly protein 1, mitochondrial, found in Saccharomyces cerevisiae (strain ATCC 204508 / S288c) (Baker's yeast).